The primary structure comprises 215 residues: Ribosomal RNA small subunit methyltransferase G (215 aa).

Residues G77, F82, 130 to 131 (IE), and R146 contribute to the S-adenosyl-L-methionine site.

Belongs to the methyltransferase superfamily. RNA methyltransferase RsmG family.

Its subcellular location is the cytoplasm. The enzyme catalyses guanosine(527) in 16S rRNA + S-adenosyl-L-methionine = N(7)-methylguanosine(527) in 16S rRNA + S-adenosyl-L-homocysteine. Its function is as follows. Specifically methylates the N7 position of guanine in position 527 of 16S rRNA. This Bartonella bacilliformis (strain ATCC 35685 / KC583 / Herrer 020/F12,63) protein is Ribosomal RNA small subunit methyltransferase G.